The chain runs to 498 residues: ADP,ATP carrier protein 1 (498 aa).

Residues 1–33 (MSTSKSENYLSELRKIIWPIEQHENKKFLPLAF) are Cytoplasmic-facing. A helical membrane pass occupies residues 34–54 (MMFCILLNYSTLRSIKDGFVV). C37 and C85 are oxidised to a cystine. Over 55 to 67 (TDIGTESISFLKT) the chain is Extracellular. The chain crosses the membrane as a helical span at residues 68–88 (YIVLPSAVIAMVIYVKLCDIL). The Cytoplasmic segment spans residues 89 to 92 (KQEN). A helical membrane pass occupies residues 93 to 113 (IFYVITSFFLGYFALFAFVLY). The Extracellular segment spans residues 114-147 (PYPDLVHPDHKTIESLSLAYPNFKWFIKIVGKWS). The helical transmembrane segment at 148–168 (FASFYTIAELWGTMMLSLLFW) threads the bilayer. The Cytoplasmic portion of the chain corresponds to 169-184 (QFANQITKITEAKRFY). Residues 185 to 205 (SMFGLLANLALPVTSVVIGYF) traverse the membrane as a helical segment. The Extracellular segment spans residues 206 to 218 (LHEKTQIVSEHLK). Residues 219–239 (FIPLFVIMITSSFLIILTYRW) form a helical membrane-spanning segment. The Cytoplasmic portion of the chain corresponds to 240-279 (MNKNVLTDPRLYDPTLVKEKKAKAKLSFIESFKMIFTSKY). Residues 280–300 (VGYIALLIIAYGVSVNLVEGV) form a helical membrane-spanning segment. At 301 to 320 (WKSKVKELYPTKEAYTIYMG) the chain is on the extracellular side. A helical transmembrane segment spans residues 321–341 (QFQFYQGWVAIAFMLIGSNIL). The Cytoplasmic portion of the chain corresponds to 342–348 (RKVSWLT). A helical membrane pass occupies residues 349–369 (AAMITPLMMFITGAAFFSFIF). Residues 370–379 (FDSVIAMNLT) are Extracellular-facing. A helical membrane pass occupies residues 380-400 (GILASSPLTLAVMFGMIQNVL). At 401 to 438 (SKGVKYSLFDATKNMAYIPLDKDLRVKGQAAVEVIGGR) the chain is on the cytoplasmic side. 436-442 (GGRLGKS) provides a ligand contact to ATP. Residues 439–459 (LGKSGGAIIQSTFFILFPAFG) form a helical membrane-spanning segment. Topologically, residues 460–465 (FIEATP) are extracellular. A helical transmembrane segment spans residues 466–486 (YFASIFFIIVILWIFAVKGLN). The Cytoplasmic portion of the chain corresponds to 487–498 (KEYQVLVNKNEN).

The protein belongs to the ADP/ATP translocase tlc family.

The protein resides in the cell membrane. Its function is as follows. Provides the rickettsial cell with host ATP in exchange for rickettsial ADP. This is an obligate exchange system. This energy acquiring activity is an important component of rickettsial parasitism. The sequence is that of ADP,ATP carrier protein 1 (tlcA) from Rickettsia typhi (strain ATCC VR-144 / Wilmington).